Here is a 263-residue protein sequence, read N- to C-terminus: Acyl-[acyl-carrier-protein]--UDP-N-acetylglucosamine O-acyltransferase (263 aa).

This sequence belongs to the transferase hexapeptide repeat family. LpxA subfamily. As to quaternary structure, homotrimer.

Its subcellular location is the cytoplasm. It carries out the reaction a (3R)-hydroxyacyl-[ACP] + UDP-N-acetyl-alpha-D-glucosamine = a UDP-3-O-[(3R)-3-hydroxyacyl]-N-acetyl-alpha-D-glucosamine + holo-[ACP]. It functions in the pathway glycolipid biosynthesis; lipid IV(A) biosynthesis; lipid IV(A) from (3R)-3-hydroxytetradecanoyl-[acyl-carrier-protein] and UDP-N-acetyl-alpha-D-glucosamine: step 1/6. Its function is as follows. Involved in the biosynthesis of lipid A, a phosphorylated glycolipid that anchors the lipopolysaccharide to the outer membrane of the cell. The chain is Acyl-[acyl-carrier-protein]--UDP-N-acetylglucosamine O-acyltransferase from Tolumonas auensis (strain DSM 9187 / NBRC 110442 / TA 4).